The primary structure comprises 379 residues: Guanine nucleotide-binding protein G(s) subunit alpha (379 aa).

The segment at 1–25 (MGCLGNSKTEDQRNEEKVQRETNKK) is disordered. A lipid anchor (N-palmitoyl glycine) is attached at glycine 2. Cysteine 3 carries S-palmitoyl cysteine lipidation. The segment covering 8-25 (KTEDQRNEEKVQRETNKK) has biased composition (basic and acidic residues). Positions 39-379 (ATHRLLLLGA…RMHLRQYELL (341 aa)) constitute a G-alpha domain. The G1 motif stretch occupies residues 42–55 (RLLLLGAGESGKSS). Residues 47–55 (GAGESGKSS), 182–189 (LLRCRVLT), 208–212 (DVGGQ), 277–280 (NKQD), and alanine 351 contribute to the GTP site. Residues serine 54 and threonine 189 each coordinate Mg(2+). Residues 181–189 (DLLRCRVLT) form a G2 motif region. The interval 204-213 (FHMFDVGGQR) is G3 motif. The interval 273-280 (ILFLNKQD) is G4 motif. Residues 349–354 (TCAVDT) form a G5 motif region.

It belongs to the G-alpha family. G(s) subfamily. In terms of assembly, heterotrimeric G proteins are composed of 3 units; alpha, beta and gamma. The alpha chain contains the guanine nucleotide binding site.

The protein localises to the cell membrane. Functionally, guanine nucleotide-binding proteins (G proteins) function as transducers in numerous signaling pathways controlled by G protein-coupled receptors (GPCRs). Signaling involves the activation of adenylyl cyclases, resulting in increased levels of the signaling molecule cAMP. GNAS functions downstream of several GPCRs, including beta-adrenergic receptors. Stimulates the Ras signaling pathway. The chain is Guanine nucleotide-binding protein G(s) subunit alpha (gnas) from Xenopus laevis (African clawed frog).